A 402-amino-acid chain; its full sequence is Formate-dependent phosphoribosylglycinamide formyltransferase (402 aa).

N(1)-(5-phospho-beta-D-ribosyl)glycinamide is bound by residues Glu-23–Leu-24 and Glu-83. Residues Arg-115, Lys-156, Glu-196 to Val-199, and Glu-204 each bind ATP. The ATP-grasp domain maps to Arg-120 to Leu-316. Mg(2+)-binding residues include Glu-274 and Glu-287. N(1)-(5-phospho-beta-D-ribosyl)glycinamide contacts are provided by residues Asp-294, Lys-364, and Arg-371–Arg-372.

The protein belongs to the PurK/PurT family. As to quaternary structure, homodimer.

The catalysed reaction is N(1)-(5-phospho-beta-D-ribosyl)glycinamide + formate + ATP = N(2)-formyl-N(1)-(5-phospho-beta-D-ribosyl)glycinamide + ADP + phosphate + H(+). The protein operates within purine metabolism; IMP biosynthesis via de novo pathway; N(2)-formyl-N(1)-(5-phospho-D-ribosyl)glycinamide from N(1)-(5-phospho-D-ribosyl)glycinamide (formate route): step 1/1. Functionally, involved in the de novo purine biosynthesis. Catalyzes the transfer of formate to 5-phospho-ribosyl-glycinamide (GAR), producing 5-phospho-ribosyl-N-formylglycinamide (FGAR). Formate is provided by PurU via hydrolysis of 10-formyl-tetrahydrofolate. This chain is Formate-dependent phosphoribosylglycinamide formyltransferase, found in Ignicoccus hospitalis (strain KIN4/I / DSM 18386 / JCM 14125).